Reading from the N-terminus, the 76-residue chain is Probable insulin-like peptide alpha-type 3 (76 aa).

Residues methionine 1 to alanine 18 form the signal peptide. 3 disulfide bridges follow: cysteine 28-cysteine 58, cysteine 40-cysteine 71, and cysteine 46-cysteine 72.

It belongs to the insulin family.

It localises to the secreted. The polypeptide is Probable insulin-like peptide alpha-type 3 (ins-23) (Caenorhabditis elegans).